The chain runs to 1359 residues: Nuclear protein STH1/NPS1 (1359 aa).

Position 38 is a phosphoserine (S38). One can recognise an HSA domain in the interval 307–383 (LERQQLLEKR…AKQRLAALKS (77 aa)). In terms of domain architecture, Helicase ATP-binding spans 482-647 (VSLYNNHLNG…WALLNFVLPK (166 aa)). ATP is bound at residue 495–502 (DEMGLGKT). Residues 597–600 (DEGH) carry the DEGH box motif. In terms of domain architecture, Helicase C-terminal spans 795 to 956 (LLDRVLPKFK…NKSTAEEQEA (162 aa)). The tract at residues 1090–1246 (RERRRLRQNG…TAAKKTKTKS (157 aa)) is disordered. Polar residues predominate over residues 1108 to 1126 (LENTPEASETSLIENNSFT). Composition is skewed to basic residues over residues 1143–1154 (RSKRRSSRKKRT) and 1198–1210 (KKKK…KIKL). A compositionally biased stretch (basic and acidic residues) spans 1219-1232 (NDGKRAEEKPESKS). The segment covering 1233-1246 (PAKKTAAKKTKTKS) has biased composition (basic residues). Residues 1257–1357 (KLVEEMREQL…EFTDEWFKEH (101 aa)) enclose the Bromo domain.

This sequence belongs to the SNF2/RAD54 helicase family. As to quaternary structure, interacts directly with SFH1, CSE4, histones H3, H4 and H2B, and via its N-terminus, with RSC8. Interacts with LDB7, NPL6 and RTT102. Component of the two forms of the RSC complex composed of at least either RSC1 or RSC2, and ARP7, ARP9, LDB7, NPL6, RSC3, RSC30, RSC4, RSC58, RSC6, RSC8, RSC9, SFH1, STH1, HTL1 and probably RTT102. The complexes interact with histone and histone variant components of centromeric chromatin.

It localises to the nucleus. It carries out the reaction ATP + H2O = ADP + phosphate + H(+). Catalytic component of the chromatin structure-remodeling complex (RSC), which is involved in transcription regulation and nucleosome positioning. RSC is responsible for the transfer of a histone octamer from a nucleosome core particle to naked DNA. The reaction requires ATP and involves an activated RSC-nucleosome intermediate. Remodeling reaction also involves DNA translocation, DNA twist and conformational change. As a reconfigurer of centromeric and flanking nucleosomes, RSC complex is required both for proper kinetochore function in chromosome segregation and, via a PKC1-dependent signaling pathway, for organization of the cellular cytoskeleton. This subunit is the essential ATPase of the complex. It is a DNA translocase capable of nucleosome remodeling. Required for full expression of early meiotic genes. Essential for mitotic growth and repression of CHA1 expression. Also involved in G2 phase control. In Saccharomyces cerevisiae (strain ATCC 204508 / S288c) (Baker's yeast), this protein is Nuclear protein STH1/NPS1 (STH1).